The sequence spans 241 residues: Chaperone protein FimC (241 aa).

The signal sequence occupies residues Met1–Ala36.

The protein belongs to the periplasmic pilus chaperone family.

It localises to the periplasm. Required for the biogenesis of type 1 fimbriae. Binds and interact with FimH. The protein is Chaperone protein FimC (fimC) of Escherichia coli O6:H1 (strain CFT073 / ATCC 700928 / UPEC).